The primary structure comprises 429 residues: Glutamate-1-semialdehyde 2,1-aminomutase (429 aa).

At K265 the chain carries N6-(pyridoxal phosphate)lysine.

Belongs to the class-III pyridoxal-phosphate-dependent aminotransferase family. HemL subfamily. In terms of assembly, homodimer. It depends on pyridoxal 5'-phosphate as a cofactor.

The protein localises to the cytoplasm. It catalyses the reaction (S)-4-amino-5-oxopentanoate = 5-aminolevulinate. The protein operates within porphyrin-containing compound metabolism; protoporphyrin-IX biosynthesis; 5-aminolevulinate from L-glutamyl-tRNA(Glu): step 2/2. The protein is Glutamate-1-semialdehyde 2,1-aminomutase of Acidobacterium capsulatum (strain ATCC 51196 / DSM 11244 / BCRC 80197 / JCM 7670 / NBRC 15755 / NCIMB 13165 / 161).